A 728-amino-acid polypeptide reads, in one-letter code: Polyribonucleotide nucleotidyltransferase (728 aa).

The Mg(2+) site is built by Asp-487 and Asp-493. A KH domain is found at 554–613 (PRIEVITVPTDKIREVIGTGGKVIREIVEKTGAKVDISDDGTIKVASSDGESIRKAIAWI). The region spanning 623–691 (GKIYEGTVVK…DRGKVRLSMK (69 aa)) is the S1 motif domain. Positions 697-707 (TGEEIVYENEP) are enriched in acidic residues. The tract at residues 697–728 (TGEEIVYENEPAEQPREKREGGGGRGRRRERD) is disordered. Residues 709 to 718 (EQPREKREGG) show a composition bias toward basic and acidic residues.

The protein belongs to the polyribonucleotide nucleotidyltransferase family. The cofactor is Mg(2+).

The protein localises to the cytoplasm. The catalysed reaction is RNA(n+1) + phosphate = RNA(n) + a ribonucleoside 5'-diphosphate. Its function is as follows. Involved in mRNA degradation. Catalyzes the phosphorolysis of single-stranded polyribonucleotides processively in the 3'- to 5'-direction. The chain is Polyribonucleotide nucleotidyltransferase from Parvibaculum lavamentivorans (strain DS-1 / DSM 13023 / NCIMB 13966).